The sequence spans 352 residues: Chorismate synthase (352 aa).

Position 48 (Arg48) interacts with NADP(+). FMN is bound by residues 125-127 (RSS), 237-238 (NA), Gly278, 293-297 (KPTSS), and Arg319.

The protein belongs to the chorismate synthase family. In terms of assembly, homotetramer. FMNH2 is required as a cofactor.

The enzyme catalyses 5-O-(1-carboxyvinyl)-3-phosphoshikimate = chorismate + phosphate. It participates in metabolic intermediate biosynthesis; chorismate biosynthesis; chorismate from D-erythrose 4-phosphate and phosphoenolpyruvate: step 7/7. Catalyzes the anti-1,4-elimination of the C-3 phosphate and the C-6 proR hydrogen from 5-enolpyruvylshikimate-3-phosphate (EPSP) to yield chorismate, which is the branch point compound that serves as the starting substrate for the three terminal pathways of aromatic amino acid biosynthesis. This reaction introduces a second double bond into the aromatic ring system. The polypeptide is Chorismate synthase (Francisella tularensis subsp. mediasiatica (strain FSC147)).